We begin with the raw amino-acid sequence, 192 residues long: A-type ATP synthase subunit E (192 aa).

Belongs to the V-ATPase E subunit family. As to quaternary structure, has multiple subunits with at least A(3), B(3), C, D, E, F, H, I and proteolipid K(x).

Its subcellular location is the cell membrane. Functionally, component of the A-type ATP synthase that produces ATP from ADP in the presence of a proton gradient across the membrane. The sequence is that of A-type ATP synthase subunit E from Metallosphaera sedula (strain ATCC 51363 / DSM 5348 / JCM 9185 / NBRC 15509 / TH2).